A 255-amino-acid polypeptide reads, in one-letter code: MEFRGHDEPVDEMGVAYGRTPPSSSSSPAASASAGNGAGAAEVRYHECLRNHAAAMGGHVVDGCREFMPMPGDAADALKCAACGCHRSFHRKDDGQQQQQLRLLIPSPPTPRVPLLMPPPQPQPHPHPQHPYLHPPFPYHHTPSGSGGTTTESSSEERGPPSSSAAAAQGRRKRFRTKFTPEQKEQMLAFAERVGWRMQKQDEALVEQFCAQVGVRRQVFKVWMHNNKSSIGSSSGGGSRRQPQEQQSQQQQQQQ.

The segment at 1–35 (MEFRGHDEPVDEMGVAYGRTPPSSSSSPAASASAG) is disordered. Over residues 21–35 (PPSSSSSPAASASAG) the composition is skewed to low complexity. A ZF-HD dimerization-type; degenerate zinc finger spans residues 45 to 93 (YHECLRNHAAAMGGHVVDGCREFMPMPGDAADALKCAACGCHRSFHRKD). A compositionally biased stretch (pro residues) spans 106 to 126 (PSPPTPRVPLLMPPPQPQPHP). Disordered regions lie at residues 106 to 181 (PSPP…KFTP) and 226 to 255 (NNKS…QQQQ). Residues 139–153 (YHHTPSGSGGTTTES) are compositionally biased toward low complexity. A DNA-binding region (homeobox) is located at residues 172-235 (RKRFRTKFTP…NNKSSIGSSS (64 aa)). Positions 240-255 (RRQPQEQQSQQQQQQQ) are enriched in low complexity.

In terms of assembly, homo- and heterodimer with other ZFHD proteins.

It localises to the nucleus. Its function is as follows. Putative transcription factor. The chain is Zinc-finger homeodomain protein 6 (ZHD6) from Oryza sativa subsp. japonica (Rice).